The sequence spans 219 residues: Sugar transporter SWEET1 (219 aa).

Transmembrane regions (helical) follow at residues 3–23 (FLQL…TTGL), 38–58 (VQFL…YYGL), 63–83 (GTVI…IATY), 98–118 (LLMV…ISPG), 125–145 (LGLT…ADLL), 156–176 (LSFS…LYGL), and 189–209 (PGIF…AVIP). The MtN3/slv 1 domain maps to 5–90 (QLLSCACIIF…ATYCHYTKEK (86 aa)). One can recognise a MtN3/slv 2 domain in the interval 124 to 204 (QLGLTCSVFT…LIRFFLFWWF (81 aa)).

The protein belongs to the SWEET sugar transporter family.

It localises to the golgi apparatus membrane. It is found in the cell membrane. In terms of biological role, mediates sugar transport across membranes. The chain is Sugar transporter SWEET1 (slc50a1) from Danio rerio (Zebrafish).